Reading from the N-terminus, the 266-residue chain is Undecaprenyl-diphosphatase (266 aa).

Transmembrane regions (helical) follow at residues 1-21 (MDTF…FLPI), 39-59 (QGLS…VIYF), 87-107 (WWII…KDFI), 111-131 (LRSA…LWWA), 149-169 (ALLI…RSGA), 183-203 (AAAR…AILV), 218-238 (ALTL…HYFL), and 246-266 (MTPF…FIFL).

This sequence belongs to the UppP family.

Its subcellular location is the cell inner membrane. It carries out the reaction di-trans,octa-cis-undecaprenyl diphosphate + H2O = di-trans,octa-cis-undecaprenyl phosphate + phosphate + H(+). Catalyzes the dephosphorylation of undecaprenyl diphosphate (UPP). Confers resistance to bacitracin. The protein is Undecaprenyl-diphosphatase of Shewanella sp. (strain MR-7).